The primary structure comprises 1026 residues: Isoleucine--tRNA ligase (1026 aa).

Positions 51 to 61 match the 'HIGH' region motif; sequence PTANGRPHIGH. A 'KMSKS' region motif is present at residues 591 to 595; sequence KMSKS. Lysine 594 contributes to the ATP binding site.

The protein belongs to the class-I aminoacyl-tRNA synthetase family. IleS type 2 subfamily. In terms of assembly, monomer. The cofactor is Zn(2+).

Its subcellular location is the cytoplasm. It carries out the reaction tRNA(Ile) + L-isoleucine + ATP = L-isoleucyl-tRNA(Ile) + AMP + diphosphate. In terms of biological role, catalyzes the attachment of isoleucine to tRNA(Ile). As IleRS can inadvertently accommodate and process structurally similar amino acids such as valine, to avoid such errors it has two additional distinct tRNA(Ile)-dependent editing activities. One activity is designated as 'pretransfer' editing and involves the hydrolysis of activated Val-AMP. The other activity is designated 'posttransfer' editing and involves deacylation of mischarged Val-tRNA(Ile). In Thermoplasma acidophilum (strain ATCC 25905 / DSM 1728 / JCM 9062 / NBRC 15155 / AMRC-C165), this protein is Isoleucine--tRNA ligase.